Consider the following 452-residue polypeptide: Mitochondrial distribution and morphology protein 34 (452 aa).

An SMP-LTD domain is found at M1–R196.

The protein belongs to the MDM34 family. In terms of assembly, component of the ER-mitochondria encounter structure (ERMES) or MDM complex, composed of mmm1, mdm10, mdm12 and mdm34.

Its subcellular location is the mitochondrion outer membrane. Functionally, component of the ERMES/MDM complex, which serves as a molecular tether to connect the endoplasmic reticulum (ER) and mitochondria. Components of this complex are involved in the control of mitochondrial shape and protein biogenesis, and function in nonvesicular lipid trafficking between the ER and mitochondria. Mdm34 is required for the interaction of the ER-resident membrane protein mmm1 and the outer mitochondrial membrane-resident beta-barrel protein mdm10. The chain is Mitochondrial distribution and morphology protein 34 from Schizosaccharomyces pombe (strain 972 / ATCC 24843) (Fission yeast).